Consider the following 198-residue polypeptide: T-cell surface glycoprotein CD3 epsilon chain (198 aa).

Positions 1 to 21 are cleaved as a signal peptide; it reads MRAGTLWRVLALWLLSVAAWG. The Extracellular segment spans residues 22-120; it reads QEDDDHADDY…EACMEVDLTT (99 aa). One can recognise an Ig-like domain in the interval 28–106; that stretch reads ADDYTQKLFT…KENEHILYLK (79 aa). Cys49 and Cys90 are joined by a disulfide. Residues 121–141 traverse the membrane as a helical segment; that stretch reads VASIVVADVCVTLGLLLLVYY. At 142–198 the chain is on the cytoplasmic side; the sequence is WSKNRKAKCKPVTRGAGAGGRPRGQNKERPPPVPNPDYEPIRKGQRDLYSGLNQRGI. The interval 153–198 is disordered; the sequence is VTRGAGAGGRPRGQNKERPPPVPNPDYEPIRKGQRDLYSGLNQRGI. An NUMB-binding region region spans residues 166–183; sequence QNKERPPPVPNPDYEPIR. One can recognise an ITAM domain in the interval 169–196; that stretch reads ERPPPVPNPDYEPIRKGQRDLYSGLNQR. The tract at residues 170–177 is proline-rich sequence; sequence RPPPVPNP. A phosphotyrosine mark is found at Tyr179 and Tyr190.

As to quaternary structure, the TCR-CD3 complex is composed of a CD3D/CD3E and a CD3G/CD3E heterodimers that preferentially associate with TCRalpha and TCRbeta, respectively, to form TCRalpha/CD3E/CD3G and TCRbeta/CD3G/CD3E trimers. In turn, the hexamer interacts with CD3Z homodimer to form the TCR-CD3 complex. Alternatively, TCRalpha and TCRbeta can be replaced by TCRgamma and TCRdelta. Interacts with CD6. Interacts (via Proline-rich sequence) with NCK1; the interaction is ligand dependent but independent of tyrosine kinase activation. In terms of processing, phosphorylated on Tyr residues after T-cell receptor triggering by LCK in association with CD4/CD8.

The protein localises to the cell membrane. Its function is as follows. Part of the TCR-CD3 complex present on T-lymphocyte cell surface that plays an essential role in adaptive immune response. When antigen presenting cells (APCs) activate T-cell receptor (TCR), TCR-mediated signals are transmitted across the cell membrane by the CD3 chains CD3D, CD3E, CD3G and CD3Z. All CD3 chains contain immunoreceptor tyrosine-based activation motifs (ITAMs) in their cytoplasmic domain. Upon TCR engagement, these motifs become phosphorylated by Src family protein tyrosine kinases LCK and FYN, resulting in the activation of downstream signaling pathways. In addition of this role of signal transduction in T-cell activation, CD3E plays an essential role in correct T-cell development. Also participates in internalization and cell surface down-regulation of TCR-CD3 complexes via endocytosis sequences present in CD3E cytosolic region. In addition to its role as a TCR coreceptor, it serves as a receptor for ITPRIPL1. Ligand recognition inhibits T-cell activation by promoting interaction with NCK1, which prevents CD3E-ZAP70 interaction and blocks the ERK-NFkB signaling cascade and calcium influx. In Oryctolagus cuniculus (Rabbit), this protein is T-cell surface glycoprotein CD3 epsilon chain (CD3E).